Reading from the N-terminus, the 515-residue chain is Cyclic AMP receptor-like protein G (515 aa).

At 1-16 the chain is on the extracellular side; the sequence is MSSIIFIPNDADNINS. The helical transmembrane segment at 17–37 threads the bilayer; it reads IMVTISSSLSLVGCLFILSIY. Topologically, residues 38 to 50 are cytoplasmic; the sequence is IYYKELREFQLKL. The chain crosses the membrane as a helical span at residues 51–71; that stretch reads IFIMTINDFIISIIFLIATHI. Over 72–92 the chain is Extracellular; that stretch reads QTKYFDAITNVFPFFCNFPDS. The helical transmembrane segment at 93–113 threads the bilayer; sequence LLHYFFLSSFFWEVCIAHTLI. The Cytoplasmic segment spans residues 114–129; it reads QVIKYNNDKVEDNLKK. The helical transmembrane segment at 130–150 threads the bilayer; it reads YFIFSNGLSALIMVSLFFIRS. At 151 to 164 the chain is on the extracellular side; sequence YSKIDCHHDSIFPH. The chain crosses the membrane as a helical span at residues 165 to 185; that stretch reads LLFFIPLLLTWIYNIIVCALL. Topologically, residues 186–276 are cytoplasmic; the sequence is TKTFKEQAMN…IRKTPNIIWT (91 aa). Residues 277–297 traverse the membrane as a helical segment; sequence SIFFLFSFGFIWSWSILVIIL. The Extracellular segment spans residues 298–306; that stretch reads KYLSLDVKY. The chain crosses the membrane as a helical span at residues 307–327; that stretch reads ILMISYFFIPLHGCMNAVCFG. At 328-515 the chain is on the cytoplasmic side; the sequence is VNDRLRMNLK…FCTIDEDETK (188 aa). Residues 362 to 375 are compositionally biased toward low complexity; it reads NGNNKNNKNNNGAN. 2 disordered regions span residues 362–409 and 469–515; these read NGNN…YYQI and NNNN…DETK. Residues 385 to 396 show a composition bias toward acidic residues; that stretch reads SPDDDDDEDDDN. 2 stretches are compositionally biased toward low complexity: residues 397 to 407 and 469 to 504; these read NNNNYSDGNYY and NNNN…NNNN.

It belongs to the G-protein coupled receptor 5 family.

It localises to the membrane. In terms of biological role, receptor for cAMP. This is Cyclic AMP receptor-like protein G (crlG) from Dictyostelium discoideum (Social amoeba).